The chain runs to 568 residues: Protein yellow (568 aa).

A signal peptide spans 1–28 (MHAQDKGGVLPGLSLLLIAVAMVCPSQA). N151 and N222 each carry an N-linked (GlcNAc...) asparagine glycan.

This sequence belongs to the major royal jelly protein family.

It is found in the secreted. Controls the pigmentation pattern of the adult cuticle and larval mouth parts. The chain is Protein yellow (y) from Drosophila guanche (Fruit fly).